Reading from the N-terminus, the 491-residue chain is ATP synthase subunit beta, chloroplastic (491 aa).

Glycine 163–threonine 170 provides a ligand contact to ATP.

This sequence belongs to the ATPase alpha/beta chains family. F-type ATPases have 2 components, CF(1) - the catalytic core - and CF(0) - the membrane proton channel. CF(1) has five subunits: alpha(3), beta(3), gamma(1), delta(1), epsilon(1). CF(0) has four main subunits: a(1), b(1), b'(1) and c(9-12).

Its subcellular location is the plastid. The protein resides in the chloroplast thylakoid membrane. The enzyme catalyses ATP + H2O + 4 H(+)(in) = ADP + phosphate + 5 H(+)(out). In terms of biological role, produces ATP from ADP in the presence of a proton gradient across the membrane. The catalytic sites are hosted primarily by the beta subunits. The protein is ATP synthase subunit beta, chloroplastic of Nephroselmis olivacea (Green alga).